Here is a 1104-residue protein sequence, read N- to C-terminus: Lon protease homolog, mitochondrial (1104 aa).

The N-terminal 58 residues, 1 to 58 (MLPLRAFARLAQRPRLSRPTQLARSSLPRPSPSRPAAHYLALAPAPSTRFLHSSPPVL), are a transit peptide targeting the mitochondrion. Disordered stretches follow at residues 8-144 (ARLA…KEVA) and 275-295 (EGSQDSAKGEGEVKSFESEVP). The segment covering 22 to 46 (LARSSLPRPSPSRPAAHYLALAPAP) has biased composition (low complexity). The span at 80–103 (KQDDQVEKPLPDAESSKSAEERAK) shows a compositional bias: basic and acidic residues. The segment covering 104–128 (SQSSKPDIKASSSDSVSSSAPAPGS) has biased composition (low complexity). The span at 129 to 139 (ADGGSPPGAGG) shows a compositional bias: gly residues. Residues 155–444 (VLAIPITHRP…RALVLLKKEL (290 aa)) form the Lon N-terminal domain. Residues 281–291 (AKGEGEVKSFE) show a composition bias toward basic and acidic residues. ATP is bound at residue 597-604 (GPPGVGKT). The 188-residue stretch at 895–1082 (SPPAGVSTGL…RQVLHEAFRG (188 aa)) folds into the Lon proteolytic domain. Catalysis depends on residues S987 and K1030.

This sequence belongs to the peptidase S16 family. Homohexamer or homoheptamer. Organized in a ring with a central cavity.

The protein resides in the mitochondrion matrix. It catalyses the reaction Hydrolysis of proteins in presence of ATP.. ATP-dependent serine protease that mediates the selective degradation of misfolded, unassembled or oxidatively damaged polypeptides as well as certain short-lived regulatory proteins in the mitochondrial matrix. May also have a chaperone function in the assembly of inner membrane protein complexes. Participates in the regulation of mitochondrial gene expression and in the maintenance of the integrity of the mitochondrial genome. Binds to mitochondrial DNA in a site-specific manner. In Cryptococcus neoformans var. neoformans serotype D (strain JEC21 / ATCC MYA-565) (Filobasidiella neoformans), this protein is Lon protease homolog, mitochondrial.